We begin with the raw amino-acid sequence, 350 residues long: Ribonuclease H2 subunit B (350 aa).

Residues 134-151 (QDYSNSSDTGENQKSNSK) are compositionally biased toward polar residues. The segment at 134–153 (QDYSNSSDTGENQKSNSKTN) is disordered.

Belongs to the RNase H2 subunit B family. Highly divergent. As to quaternary structure, the RNase 2 complex is a heterotrimer composed of the catalytic subunit RNH201 and of the non-catalytic subunits RNH202 and RNH203.

It is found in the nucleus. Its function is as follows. Non catalytic subunit of RNase H2, an endonuclease that specifically degrades the RNA of RNA:DNA hybrids. Participates in DNA replication, possibly by mediating the removal of lagging-strand Okazaki fragment RNA primers during DNA replication. Mediates the excision of single ribonucleotides from DNA:RNA duplexes. The polypeptide is Ribonuclease H2 subunit B (RNH202) (Saccharomyces cerevisiae (strain ATCC 204508 / S288c) (Baker's yeast)).